The sequence spans 879 residues: MTSTNDIRSAFLEYFGSQGHRIVPSASLVPQNDPTLLFTNAGMVPFKNVFTGQETRPYSRATTAQKVVRAGGKHNDLDNVGYTARHHTFFEMMGNFSFGDYFKPEAIEFAWTLLTRDFGLPKDKLLATVYAEDEDAADLWKKIAGLSDDRIIRIGTSDNFWRMGDTGPCGPCSEIFYDHGDSVFGGPPGSPDEDGDRFVEIWNLVFMQFLDQPDGSRDALPRPSIDTGMGLERFAAIMQGKRDNYDTDTMRALIEASAEIMHQDADGPFKASHRVVADHLRSTAFLIADGVLPSKEGRGYVLRRIMRRAMRHLHIMGAKEPVFYRLLPALIQQMGAAYPELVQHQALIAQTMKGEEERFTALLERGLTLLSDELDRLGDKEALPGDVAFKLYDTFGFPLDLTQDALREKGRTVDEAGFETAMAEQRKRARAAWVGSGDAAAETVWFDARDKHGPSEFLGYVSEKADAEVQGIFRGNDELASAPAGDDTVAILLNQTPFYGESGGQVGDHGTLTAPGVRVEITDTQKRNGDLIVHYGKVVEGTLKPGMAVHAEIDHARRTAVRGHHSATHLLHEALRRQIGTHVTQKGSLNAPERLRFDISQPRPLTDEELAAVEAEVNARIRENAPVETRLMTQEEAVAEGAMALFGEKYGDEVRVVSMGKGDDDRPAYSIELCGGTHVGRVGEIGPFRIVSESGVSAGVRRIEAVCGLAAEALALETESRLKQIADLLKVPVADAASRVAALLEERKSLTAQVSDLQRKLATGEGTSATESINGITLSARDLGDVSPKELKGLAESISKQIASGVVALMSSADGRGSIVIAVTKDLTDRLDAVKLVREASALMGGKGGGGRPDMAQAGGPNADSDAVFAMLRKTLEAA.

Zn(2+) contacts are provided by histidine 565, histidine 569, cysteine 674, and histidine 678.

This sequence belongs to the class-II aminoacyl-tRNA synthetase family. Zn(2+) is required as a cofactor.

It localises to the cytoplasm. It catalyses the reaction tRNA(Ala) + L-alanine + ATP = L-alanyl-tRNA(Ala) + AMP + diphosphate. Functionally, catalyzes the attachment of alanine to tRNA(Ala) in a two-step reaction: alanine is first activated by ATP to form Ala-AMP and then transferred to the acceptor end of tRNA(Ala). Also edits incorrectly charged Ser-tRNA(Ala) and Gly-tRNA(Ala) via its editing domain. The polypeptide is Alanine--tRNA ligase (Gluconobacter oxydans (strain 621H) (Gluconobacter suboxydans)).